The primary structure comprises 31 residues: Cytochrome b6-f complex subunit 6 (31 aa).

Residues 4–26 traverse the membrane as a helical segment; it reads LTSYFGFLLAASTITPALFIGLN.

Belongs to the PetL family. The 4 large subunits of the cytochrome b6-f complex are cytochrome b6, subunit IV (17 kDa polypeptide, PetD), cytochrome f and the Rieske protein, while the 4 small subunits are PetG, PetL, PetM and PetN. The complex functions as a dimer.

Its subcellular location is the plastid. It is found in the chloroplast thylakoid membrane. Component of the cytochrome b6-f complex, which mediates electron transfer between photosystem II (PSII) and photosystem I (PSI), cyclic electron flow around PSI, and state transitions. PetL is important for photoautotrophic growth as well as for electron transfer efficiency and stability of the cytochrome b6-f complex. This is Cytochrome b6-f complex subunit 6 from Phalaenopsis aphrodite subsp. formosana (Moth orchid).